A 472-amino-acid chain; its full sequence is Chromosomal replication initiator protein DnaA (472 aa).

The segment at 1–73 (MSNMEQDRWS…LSCWQAELPE (73 aa)) is domain I, interacts with DnaA modulators. The interval 73 to 128 (EVNRVDLTVRSPVRCATPAKEVPAPVESRRDEQRPSAERSNGATPVSANHDALGGS) is domain II. The interval 90 to 124 (PAKEVPAPVESRRDEQRPSAERSNGATPVSANHDA) is disordered. Residues 99 to 109 (ESRRDEQRPSA) show a composition bias toward basic and acidic residues. Positions 110–119 (ERSNGATPVS) are enriched in polar residues. Residues 129 to 351 (PLDPRLTFAS…GAINRLLAHS (223 aa)) form a domain III, AAA+ region region. Positions 176, 178, 179, and 180 each coordinate ATP. Positions 352–472 (KLNNQPVTLE…VESLKRQLQE (121 aa)) are domain IV, binds dsDNA.

Belongs to the DnaA family. As to quaternary structure, oligomerizes as a right-handed, spiral filament on DNA at oriC.

The protein resides in the cytoplasm. Functionally, plays an essential role in the initiation and regulation of chromosomal replication. ATP-DnaA binds to the origin of replication (oriC) to initiate formation of the DNA replication initiation complex once per cell cycle. Binds the DnaA box (a 9 base pair repeat at the origin) and separates the double-stranded (ds)DNA. Forms a right-handed helical filament on oriC DNA; dsDNA binds to the exterior of the filament while single-stranded (ss)DNA is stabiized in the filament's interior. The ATP-DnaA-oriC complex binds and stabilizes one strand of the AT-rich DNA unwinding element (DUE), permitting loading of DNA polymerase. After initiation quickly degrades to an ADP-DnaA complex that is not apt for DNA replication. Binds acidic phospholipids. The sequence is that of Chromosomal replication initiator protein DnaA from Rhodopseudomonas palustris (strain ATCC BAA-98 / CGA009).